The sequence spans 77 residues: uncharacterized protein (77 aa).

A helical membrane pass occupies residues 13-33 (VPVIRLSVFLHFFFVFPFCLL).

The protein localises to the membrane. This is an uncharacterized protein from Saccharomyces cerevisiae (strain ATCC 204508 / S288c) (Baker's yeast).